Here is a 430-residue protein sequence, read N- to C-terminus: Serine hydroxymethyltransferase (430 aa).

Residues L126 and 130-132 contribute to the (6S)-5,6,7,8-tetrahydrofolate site; that span reads GHL. At K235 the chain carries N6-(pyridoxal phosphate)lysine.

This sequence belongs to the SHMT family. In terms of assembly, homodimer. The cofactor is pyridoxal 5'-phosphate.

It localises to the cytoplasm. It catalyses the reaction (6R)-5,10-methylene-5,6,7,8-tetrahydrofolate + glycine + H2O = (6S)-5,6,7,8-tetrahydrofolate + L-serine. Its pathway is one-carbon metabolism; tetrahydrofolate interconversion. The protein operates within amino-acid biosynthesis; glycine biosynthesis; glycine from L-serine: step 1/1. In terms of biological role, catalyzes the reversible interconversion of serine and glycine with tetrahydrofolate (THF) serving as the one-carbon carrier. This reaction serves as the major source of one-carbon groups required for the biosynthesis of purines, thymidylate, methionine, and other important biomolecules. Also exhibits THF-independent aldolase activity toward beta-hydroxyamino acids, producing glycine and aldehydes, via a retro-aldol mechanism. In Leifsonia xyli subsp. xyli (strain CTCB07), this protein is Serine hydroxymethyltransferase.